Reading from the N-terminus, the 104-residue chain is U20-lycotoxin-Ls1d (104 aa).

Residues 1-30 (MFSTSDQVSKMNSRILSALLILGIATCVIA) form the signal peptide. The region spanning 31–76 (GGFCPKSRHPQCNLSYKINDCCAQSDCRVGSVCCVEGCGNVCRAES) is the WAP domain. Disulfide bonds link cysteine 34/cysteine 64, cysteine 42/cysteine 68, cysteine 51/cysteine 63, cysteine 52/cysteine 90, and cysteine 57/cysteine 72.

It belongs to the venom protein 11 family. 02 (wap-2) subfamily. In terms of processing, contains 5 disulfide bonds. Expressed by the venom gland.

The protein localises to the secreted. Has antibacterial activity. This Lycosa singoriensis (Wolf spider) protein is U20-lycotoxin-Ls1d.